A 270-amino-acid polypeptide reads, in one-letter code: Co-chaperone protein DjlA (270 aa).

Residues 1 to 6 lie on the Periplasmic side of the membrane; that stretch reads MQYWGK. The chain crosses the membrane as a helical span at residues 7-31; the sequence is IIGVAVALMMGGGFWGVVLGLLVGH. At 32-270 the chain is on the cytoplasmic side; sequence MFDKARSRKM…ELIKEQKGFK (239 aa). The J domain occupies 204–270; the sequence is DACNVLGVKT…ELIKEQKGFK (67 aa).

In terms of assembly, homodimer.

Its subcellular location is the cell inner membrane. Regulatory DnaK co-chaperone. Direct interaction between DnaK and DjlA is needed for the induction of the wcaABCDE operon, involved in the synthesis of a colanic acid polysaccharide capsule, possibly through activation of the RcsB/RcsC phosphotransfer signaling pathway. The colanic acid capsule may help the bacterium survive conditions outside the host. The sequence is that of Co-chaperone protein DjlA from Salmonella paratyphi A (strain ATCC 9150 / SARB42).